Reading from the N-terminus, the 289-residue chain is Glyoxylate/succinic semialdehyde reductase 1 (289 aa).

M1 is modified (N-acetylmethionine). NADP(+)-binding positions include 4 to 18 (GFLGLGIMGKAMSMN) and T95. Residue K170 is part of the active site. K238 contributes to the NADP(+) binding site.

It belongs to the HIBADH-related family. NP60 subfamily.

It localises to the cytoplasm. It is found in the cytosol. It catalyses the reaction glycolate + NADP(+) = glyoxylate + NADPH + H(+). The catalysed reaction is 4-hydroxybutanoate + NADP(+) = succinate semialdehyde + NADPH + H(+). Its activity is regulated as follows. The ratio of NADPH/NADP(+) may regulate enzymatic activity. In terms of biological role, catalyzes the NADPH-dependent reduction of glyoxylate to glycolate as well as succinic semialdehyde (SSA) to gamma-hydroxybutyrate in vitro. May function in redox homeostasis and play a role in oxidative stress tolerance by detoxifying glyoxylate and SSA generated in glycolate metabolism and GABA metabolism, respectively. This Arabidopsis thaliana (Mouse-ear cress) protein is Glyoxylate/succinic semialdehyde reductase 1 (GLYR1).